We begin with the raw amino-acid sequence, 379 residues long: Acyl-CoA dehydrogenase (379 aa).

It belongs to the acyl-CoA dehydrogenase family. The cofactor is FAD.

The catalysed reaction is a 2,3-saturated acyl-CoA + A = a 2,3-dehydroacyl-CoA + AH2. The sequence is that of Acyl-CoA dehydrogenase (mmgC) from Bacillus subtilis (strain 168).